A 121-amino-acid polypeptide reads, in one-letter code: ATP synthase epsilon chain (121 aa).

The protein belongs to the ATPase epsilon chain family. F-type ATPases have 2 components, CF(1) - the catalytic core - and CF(0) - the membrane proton channel. CF(1) has five subunits: alpha(3), beta(3), gamma(1), delta(1), epsilon(1). CF(0) has three main subunits: a, b and c.

It localises to the cell membrane. In terms of biological role, produces ATP from ADP in the presence of a proton gradient across the membrane. This chain is ATP synthase epsilon chain, found in Mycobacterium marinum (strain ATCC BAA-535 / M).